A 426-amino-acid polypeptide reads, in one-letter code: Zinc finger CCCH domain-containing protein 15 (426 aa).

Positions 1-12 are enriched in low complexity; that stretch reads MPPKKQAQAGGS. Disordered stretches follow at residues 1–30 and 53–74; these read MPPK…KTFG and GQQN…KDDK. Residues 13-29 are compositionally biased toward basic and acidic residues; the sequence is KKAEQKKKEKIIEDKTF. The span at 53-62 shows a compositional bias: polar residues; sequence GQQNPRQVAQ. Residues 61–86 are a coiled coil; the sequence is AQSEAEKKLKKDDKKKELQELNELFK. Basic and acidic residues predominate over residues 64 to 74; that stretch reads EAEKKLKKDDK. 2 C3H1-type zinc fingers span residues 99 to 126 and 174 to 212; these read DPKS…HDLT and PKTQ…HALP. Positions 218 to 285 form a coiled coil; sequence KKDKKKEEKE…RRKADFKAGK (68 aa). Serine 231 carries the phosphoserine modification. Positions 236 to 260 are required for interaction with DRG1; it reads IERERSALGPNVTKITLESFLAWKK. The disordered stretch occupies residues 299-326; that stretch reads PELVNDDDEEADDTRYTQGTGGDEVDDS. Phosphoserine occurs at positions 351, 360, and 381. A disordered region spans residues 358–411; the sequence is YTSDKDENKLSEASGGRAENGERSDLEEDNEREGTENGAIDAVPVDENLFTGED.

This sequence belongs to the ZC3H15/TMA46 family. As to quaternary structure, interacts with DRG1; this interaction prevents DRG1 poly-ubiquitination and degradation by proteasome. DRG1-ZC3H15/DFRP1 complex co-sediments with polysomes. Associates with microtubules.

It localises to the cytoplasm. Its subcellular location is the nucleus. Functionally, protects DRG1 from proteolytic degradation. Stimulates DRG1 GTPase activity likely by increasing the affinity for the potassium ions. The polypeptide is Zinc finger CCCH domain-containing protein 15 (ZC3H15) (Homo sapiens (Human)).